We begin with the raw amino-acid sequence, 640 residues long: DNA gyrase subunit B (640 aa).

The Toprim domain maps to 423–537; it reads AELYIVEGDS…NGNIYIAQPP (115 aa). 3 residues coordinate Mg(2+): Glu429, Asp502, and Asp504.

It belongs to the type II topoisomerase GyrB family. As to quaternary structure, heterotetramer, composed of two GyrA and two GyrB chains. In the heterotetramer, GyrA contains the active site tyrosine that forms a transient covalent intermediate with DNA, while GyrB binds cofactors and catalyzes ATP hydrolysis. Mg(2+) serves as cofactor. The cofactor is Mn(2+). It depends on Ca(2+) as a cofactor.

The protein localises to the cytoplasm. The enzyme catalyses ATP-dependent breakage, passage and rejoining of double-stranded DNA.. A type II topoisomerase that negatively supercoils closed circular double-stranded (ds) DNA in an ATP-dependent manner to modulate DNA topology and maintain chromosomes in an underwound state. Negative supercoiling favors strand separation, and DNA replication, transcription, recombination and repair, all of which involve strand separation. Also able to catalyze the interconversion of other topological isomers of dsDNA rings, including catenanes and knotted rings. Type II topoisomerases break and join 2 DNA strands simultaneously in an ATP-dependent manner. The protein is DNA gyrase subunit B of Spiroplasma citri.